We begin with the raw amino-acid sequence, 615 residues long: UvrABC system protein C (615 aa).

The GIY-YIG domain maps to 14–91 (TSPGCYIHKD…IKENKPKYNI (78 aa)). The UVR domain occupies 196–231 (NKIIDELKGKMAAAAQTMEFERAAEYRDLIQAIGTL).

The protein belongs to the UvrC family. In terms of assembly, interacts with UvrB in an incision complex.

It localises to the cytoplasm. Its function is as follows. The UvrABC repair system catalyzes the recognition and processing of DNA lesions. UvrC both incises the 5' and 3' sides of the lesion. The N-terminal half is responsible for the 3' incision and the C-terminal half is responsible for the 5' incision. In Streptococcus pneumoniae (strain ATCC 700669 / Spain 23F-1), this protein is UvrABC system protein C.